A 49-amino-acid chain; its full sequence is Large ribosomal subunit protein eL40 (49 aa).

The protein belongs to the eukaryotic ribosomal protein eL40 family.

This is Large ribosomal subunit protein eL40 from Natronomonas pharaonis (strain ATCC 35678 / DSM 2160 / CIP 103997 / JCM 8858 / NBRC 14720 / NCIMB 2260 / Gabara) (Halobacterium pharaonis).